A 449-amino-acid chain; its full sequence is Probable secreted beta-glucosidase ARB_04747 (449 aa).

The N-terminal stretch at 1-21 (MKFSSGILSLAVAASVQSVQA) is a signal peptide. N57 carries N-linked (GlcNAc...) asparagine glycosylation. Residues 96 to 185 (SPPACPAPSY…RPFPDGEIDC (90 aa)) are disordered. A compositionally biased stretch (pro residues) spans 98–125 (PACPAPSYVPSPPAAPSSPPAAPQPPSK). Residues 131-150 (EEPKKPEEPKKPEGPKKPEG) show a composition bias toward basic and acidic residues.

It belongs to the SUN family.

It is found in the secreted. The protein resides in the cell wall. Its function is as follows. Cell surface beta-glucosidase involved in cytokinesis, cell wall biogenesis, adhesion to host tissue; thus playing an important role in the host-pathogen interaction. Has hydrolytic activity on linear (1-&gt;3)-beta-D-glucans such as laminaribiose and other laminarioligosaccharides. The chain is Probable secreted beta-glucosidase ARB_04747 from Arthroderma benhamiae (strain ATCC MYA-4681 / CBS 112371) (Trichophyton mentagrophytes).